A 176-amino-acid chain; its full sequence is MCKKIIWLTIGKIVAPQGLSGKVRINPSSDFPERFIKSGDRWLQYDNEEPQKIQLNSGRQIPGKSIYVVEFQGIDDREKAKALVGKKLLIDSSHRPTLAPGEFHLLDLLGLKVRLKNDHREIGEVTNLTSAGNDLLEVRLLSGKKVLVPFVKEIVPEIKLQEGWLMVCPPPGLFDL.

One can recognise a PRC barrel domain in the interval 100–173 (PGEFHLLDLL…WLMVCPPPGL (74 aa)).

Belongs to the RimM family. In terms of assembly, binds ribosomal protein uS19.

The protein localises to the cytoplasm. Its function is as follows. An accessory protein needed during the final step in the assembly of 30S ribosomal subunit, possibly for assembly of the head region. Essential for efficient processing of 16S rRNA. May be needed both before and after RbfA during the maturation of 16S rRNA. It has affinity for free ribosomal 30S subunits but not for 70S ribosomes. In Prochlorococcus marinus (strain SARG / CCMP1375 / SS120), this protein is Ribosome maturation factor RimM.